We begin with the raw amino-acid sequence, 63 residues long: Large ribosomal subunit protein bL28 (63 aa).

Belongs to the bacterial ribosomal protein bL28 family.

The sequence is that of Large ribosomal subunit protein bL28 from Pelobacter propionicus (strain DSM 2379 / NBRC 103807 / OttBd1).